Consider the following 207-residue polypeptide: ATP synthase subunit a (207 aa).

The next 6 helical transmembrane spans lie at 3–23, 62–82, 88–108, 119–139, 158–178, and 180–200; these read QHVI…TIFA, LIAS…IPGL, NLNT…FEGI, FLGP…LSHL, LISV…VMLI, and LIAV…YIAG.

This sequence belongs to the ATPase A chain family. As to quaternary structure, F-type ATPases have 2 components, CF(1) - the catalytic core - and CF(0) - the membrane proton channel. CF(1) has five subunits: alpha(3), beta(3), gamma(1), delta(1), epsilon(1). CF(0) has three main subunits: a(1), b(2) and c(9-12). The alpha and beta chains form an alternating ring which encloses part of the gamma chain. CF(1) is attached to CF(0) by a central stalk formed by the gamma and epsilon chains, while a peripheral stalk is formed by the delta and b chains.

The protein resides in the cell inner membrane. Key component of the proton channel; it plays a direct role in the translocation of protons across the membrane. The sequence is that of ATP synthase subunit a from Sulfurihydrogenibium sp. (strain YO3AOP1).